Consider the following 341-residue polypeptide: Arfaptin-2 (341 aa).

Residues 46-84 (NETSIVSGGYGGSGDGLIPTGSGRHPSHSTSPSGPGDEV) form a disordered region. Low complexity predominate over residues 65–81 (TGSGRHPSHSTSPSGPG). Ser72 carries the phosphoserine modification. In terms of domain architecture, AH spans 121 to 321 (TVDLELELQI…NQKQLEQTLQ (201 aa)).

In terms of assembly, forms homodimers or heterodimers with ARFIP1. Interacts with RAC1. Specifically binds to GTP-bound ARF1 and ARF6, but binds to RAC1.GTP and RAC1.GDP with similar affinities. Interacts with ARL1. Interacts (via N-terminus) with IKBKB and IKBKG; these interactions inhibit activation of NF-kappa-B.

Its subcellular location is the golgi apparatus. It is found in the trans-Golgi network membrane. Its function is as follows. Plays a role in constitutive metalloproteinase (MMP) secretion from the trans Golgi network. May have important functions during vesicle biogenesis at certain cargo subdomains, which could be predominantly utilized by secreted MMPs, such as MMP7 and MMP2. Also involved in autophagy by regulating the starvation-dependent trafficking of ATG9A vesicles which deliver the phosphatidylinositol 4-kinase beta (PI4KB) to the autophagosome initiation site. Involved in phagophore growth during mitophagy by regulating ATG9A trafficking to mitochondria. In addition, plays a role in NF-kappa-B inhibition by interacting with IKBKB and IKBKG. The protein is Arfaptin-2 of Mus musculus (Mouse).